The following is a 475-amino-acid chain: Putative histidine permease (475 aa).

The next 12 helical transmembrane spans lie at 20–40 (LFMISLGGVIGTGLFLSTGYT), 44–64 (AGPGGTILAYVIGGLMMYLVM), 87–107 (FIGPSTGFMVGIMYWINWVVT), 127–147 (SVWMWSAIFAALLFICNAFSV), 162–182 (IVTIILFIILGGAAMFGLISL), 199–219 (GLFPNGFLAVFIAMISVSFAF), 246–266 (VAWRTVIFFIGAVFILSGLIS), 277–297 (FVAVFAEIGIPYAADIMNFVI), 341–361 (ALMISMAVSCLSLVSSIVAPG), 363–383 (VYVVMVAIAGFAGVVVWMSIA), 410–430 (YPLMPIAALLLCSASCIGLAF), and 434–454 (QRIALFCGVPCIILCYLIYHF).

Belongs to the amino acid-polyamine-organocation (APC) superfamily.

It is found in the cell membrane. The chain is Putative histidine permease (hutM) from Bacillus subtilis (strain 168).